The primary structure comprises 320 residues: Cytochrome f (320 aa).

A signal peptide spans 1–35; sequence MQNRNTFSWVKEQMTRFISVSIMIYVITRTSISNA. Heme-binding residues include Y36, C56, C59, and H60. The helical transmembrane segment at 286–306 threads the bilayer; sequence VQGLLFFLASVILAQIFLVLK.

It belongs to the cytochrome f family. In terms of assembly, the 4 large subunits of the cytochrome b6-f complex are cytochrome b6, subunit IV (17 kDa polypeptide, petD), cytochrome f and the Rieske protein, while the 4 small subunits are PetG, PetL, PetM and PetN. The complex functions as a dimer. Heme is required as a cofactor.

The protein resides in the plastid. The protein localises to the chloroplast thylakoid membrane. Its function is as follows. Component of the cytochrome b6-f complex, which mediates electron transfer between photosystem II (PSII) and photosystem I (PSI), cyclic electron flow around PSI, and state transitions. This is Cytochrome f from Drimys granadensis.